The following is a 212-amino-acid chain: MTTQKIVHTKSPDGSKLFRHQAKFVAGAMNINQIPNFSLPEIAFVGKSNVGKSSLINTICNNKNLAKVSNTPGRTRQINFFNLADKLIIVDLPGYGFANVPISVKEQWEVLISYYLRNSYSLRLVNLLIDSRRGIKENDKKVAELLLANKREFQIIFTKSDKVTDRKNLNDEAQNFLATLNYSCNVMYVSSRSKEGARELKASLAKCIKPQR.

Residues 38–210 (SLPEIAFVGK…KASLAKCIKP (173 aa)) form the EngB-type G domain. Residues 46–53 (GKSNVGKS), 73–77 (GRTRQ), 91–94 (DLPG), 158–161 (TKSD), and 189–191 (VSS) contribute to the GTP site. The Mg(2+) site is built by Ser53 and Thr75.

Belongs to the TRAFAC class TrmE-Era-EngA-EngB-Septin-like GTPase superfamily. EngB GTPase family. Mg(2+) is required as a cofactor.

Necessary for normal cell division and for the maintenance of normal septation. The chain is Probable GTP-binding protein EngB from Rickettsia felis (strain ATCC VR-1525 / URRWXCal2) (Rickettsia azadi).